The primary structure comprises 717 residues: DNA ligase (717 aa).

NAD(+) contacts are provided by residues 41–45 (DARYD), 90–91 (SL), and E124. K126 serves as the catalytic N6-AMP-lysine intermediate. NAD(+) is bound by residues R147, E183, K299, and K323. The Zn(2+) site is built by C428, C431, C446, and C452. The 82-residue stretch at 636-717 (ADYSPVAGKT…WLQLINEHHI (82 aa)) folds into the BRCT domain.

It belongs to the NAD-dependent DNA ligase family. LigA subfamily. Requires Mg(2+) as cofactor. It depends on Mn(2+) as a cofactor.

It catalyses the reaction NAD(+) + (deoxyribonucleotide)n-3'-hydroxyl + 5'-phospho-(deoxyribonucleotide)m = (deoxyribonucleotide)n+m + AMP + beta-nicotinamide D-nucleotide.. Functionally, DNA ligase that catalyzes the formation of phosphodiester linkages between 5'-phosphoryl and 3'-hydroxyl groups in double-stranded DNA using NAD as a coenzyme and as the energy source for the reaction. It is essential for DNA replication and repair of damaged DNA. The polypeptide is DNA ligase (Bartonella bacilliformis (strain ATCC 35685 / KC583 / Herrer 020/F12,63)).